Reading from the N-terminus, the 473-residue chain is Siroheme synthase 1 (473 aa).

A precorrin-2 dehydrogenase /sirohydrochlorin ferrochelatase region spans residues 1-204 (MDYFPIFCQL…NDHVQADQHV (204 aa)). NAD(+)-binding positions include 22 to 23 (EI) and 43 to 44 (CE). Position 128 is a phosphoserine (S128). Positions 216-473 (GEVVLVGAGP…KVTECVAHVG (258 aa)) are uroporphyrinogen-III C-methyltransferase. P225 is a binding site for S-adenosyl-L-methionine. The Proton acceptor role is filled by D248. K270 (proton donor) is an active-site residue. S-adenosyl-L-methionine contacts are provided by residues 301–303 (GGD), I306, 331–332 (TA), M382, and G411.

In the N-terminal section; belongs to the precorrin-2 dehydrogenase / sirohydrochlorin ferrochelatase family. It in the C-terminal section; belongs to the precorrin methyltransferase family.

It catalyses the reaction uroporphyrinogen III + 2 S-adenosyl-L-methionine = precorrin-2 + 2 S-adenosyl-L-homocysteine + H(+). The catalysed reaction is precorrin-2 + NAD(+) = sirohydrochlorin + NADH + 2 H(+). The enzyme catalyses siroheme + 2 H(+) = sirohydrochlorin + Fe(2+). It functions in the pathway cofactor biosynthesis; adenosylcobalamin biosynthesis; precorrin-2 from uroporphyrinogen III: step 1/1. It participates in cofactor biosynthesis; adenosylcobalamin biosynthesis; sirohydrochlorin from precorrin-2: step 1/1. The protein operates within porphyrin-containing compound metabolism; siroheme biosynthesis; precorrin-2 from uroporphyrinogen III: step 1/1. Its pathway is porphyrin-containing compound metabolism; siroheme biosynthesis; siroheme from sirohydrochlorin: step 1/1. It functions in the pathway porphyrin-containing compound metabolism; siroheme biosynthesis; sirohydrochlorin from precorrin-2: step 1/1. Multifunctional enzyme that catalyzes the SAM-dependent methylations of uroporphyrinogen III at position C-2 and C-7 to form precorrin-2 via precorrin-1. Then it catalyzes the NAD-dependent ring dehydrogenation of precorrin-2 to yield sirohydrochlorin. Finally, it catalyzes the ferrochelation of sirohydrochlorin to yield siroheme. This chain is Siroheme synthase 1, found in Yersinia pestis (strain Pestoides F).